The following is a 214-amino-acid chain: ATP phosphoribosyltransferase (214 aa).

Belongs to the ATP phosphoribosyltransferase family. Short subfamily. Heteromultimer composed of HisG and HisZ subunits.

The protein resides in the cytoplasm. It catalyses the reaction 1-(5-phospho-beta-D-ribosyl)-ATP + diphosphate = 5-phospho-alpha-D-ribose 1-diphosphate + ATP. The protein operates within amino-acid biosynthesis; L-histidine biosynthesis; L-histidine from 5-phospho-alpha-D-ribose 1-diphosphate: step 1/9. In terms of biological role, catalyzes the condensation of ATP and 5-phosphoribose 1-diphosphate to form N'-(5'-phosphoribosyl)-ATP (PR-ATP). Has a crucial role in the pathway because the rate of histidine biosynthesis seems to be controlled primarily by regulation of HisG enzymatic activity. This chain is ATP phosphoribosyltransferase, found in Lysinibacillus sphaericus (strain C3-41).